An 801-amino-acid polypeptide reads, in one-letter code: Probable inorganic carbon transporter subunit DabA (801 aa).

The Zn(2+) site is built by C330, D332, H489, and C504.

Belongs to the inorganic carbon transporter (TC 9.A.2) DabA family. As to quaternary structure, forms a complex with DabB. It depends on Zn(2+) as a cofactor.

Its subcellular location is the cell inner membrane. Its function is as follows. Part of an energy-coupled inorganic carbon pump. The chain is Probable inorganic carbon transporter subunit DabA from Jannaschia sp. (strain CCS1).